Reading from the N-terminus, the 370-residue chain is UDP-3-O-acylglucosamine N-acyltransferase (370 aa).

The active-site Proton acceptor is histidine 252. A disordered region spans residues 348–370; it reads NAAAEKRDGPAPNAASKATGDKV.

It belongs to the transferase hexapeptide repeat family. LpxD subfamily. As to quaternary structure, homotrimer.

It carries out the reaction a UDP-3-O-[(3R)-3-hydroxyacyl]-alpha-D-glucosamine + a (3R)-hydroxyacyl-[ACP] = a UDP-2-N,3-O-bis[(3R)-3-hydroxyacyl]-alpha-D-glucosamine + holo-[ACP] + H(+). It functions in the pathway bacterial outer membrane biogenesis; LPS lipid A biosynthesis. Its function is as follows. Catalyzes the N-acylation of UDP-3-O-acylglucosamine using 3-hydroxyacyl-ACP as the acyl donor. Is involved in the biosynthesis of lipid A, a phosphorylated glycolipid that anchors the lipopolysaccharide to the outer membrane of the cell. In Paraburkholderia phytofirmans (strain DSM 17436 / LMG 22146 / PsJN) (Burkholderia phytofirmans), this protein is UDP-3-O-acylglucosamine N-acyltransferase.